Here is a 185-residue protein sequence, read N- to C-terminus: Elongation factor P (185 aa).

The protein belongs to the elongation factor P family.

The protein resides in the cytoplasm. It participates in protein biosynthesis; polypeptide chain elongation. Its function is as follows. Involved in peptide bond synthesis. Stimulates efficient translation and peptide-bond synthesis on native or reconstituted 70S ribosomes in vitro. Probably functions indirectly by altering the affinity of the ribosome for aminoacyl-tRNA, thus increasing their reactivity as acceptors for peptidyl transferase. The chain is Elongation factor P from Kosmotoga olearia (strain ATCC BAA-1733 / DSM 21960 / TBF 19.5.1).